Here is a 265-residue protein sequence, read N- to C-terminus: Probable FAD synthase (265 aa).

This sequence belongs to the PAPS reductase family. FAD1 subfamily.

The catalysed reaction is FMN + ATP + H(+) = FAD + diphosphate. Its pathway is cofactor biosynthesis; FAD biosynthesis; FAD from FMN: step 1/1. Functionally, adenylates FMN to FAD. This is Probable FAD synthase from Schizosaccharomyces pombe (strain 972 / ATCC 24843) (Fission yeast).